Here is a 209-residue protein sequence, read N- to C-terminus: Large ribosomal subunit protein uL3 (209 aa).

The span at 112-122 (GTTRGHGTQGN) shows a compositional bias: polar residues. Residues 112–146 (GTTRGHGTQGNIKRWGQSRGPETHGSRYHRIPGSM) form a disordered region.

This sequence belongs to the universal ribosomal protein uL3 family. As to quaternary structure, part of the 50S ribosomal subunit. Forms a cluster with proteins L14 and L19.

In terms of biological role, one of the primary rRNA binding proteins, it binds directly near the 3'-end of the 23S rRNA, where it nucleates assembly of the 50S subunit. The sequence is that of Large ribosomal subunit protein uL3 from Lactobacillus gasseri (strain ATCC 33323 / DSM 20243 / BCRC 14619 / CIP 102991 / JCM 1131 / KCTC 3163 / NCIMB 11718 / NCTC 13722 / AM63).